The sequence spans 145 residues: Large ribosomal subunit protein uL11 (145 aa).

The protein belongs to the universal ribosomal protein uL11 family. In terms of assembly, part of the ribosomal stalk of the 50S ribosomal subunit. Interacts with L10 and the large rRNA to form the base of the stalk. L10 forms an elongated spine to which L12 dimers bind in a sequential fashion forming a multimeric L10(L12)X complex. Post-translationally, one or more lysine residues are methylated.

In terms of biological role, forms part of the ribosomal stalk which helps the ribosome interact with GTP-bound translation factors. This is Large ribosomal subunit protein uL11 from Rickettsia typhi (strain ATCC VR-144 / Wilmington).